The following is a 735-amino-acid chain: Zinc finger CCCH domain-containing protein 14 (735 aa).

Met-1 bears the N-acetylmethionine mark. The interval 78–153 (TEPSSLKSPD…RHSYDDGAST (76 aa)) is disordered. A Phosphoserine modification is found at Ser-85. Residues Lys-99, Lys-139, Lys-175, and Lys-198 each participate in a glycyl lysine isopeptide (Lys-Gly) (interchain with G-Cter in SUMO2) cross-link. Polar residues predominate over residues 131–144 (VSTSSQEQKSTNVR). Ser-240 carries the post-translational modification Phosphoserine. Residues Lys-245, Lys-283, and Lys-295 each participate in a glycyl lysine isopeptide (Lys-Gly) (interchain with G-Cter in SUMO2) cross-link. Residues 308-351 (FSHDGEEEEEDEDYGTRIGSLSSSVSVPAKPERRPSLPPSKQAN) are disordered. Residues Ser-309, Ser-327, and Ser-343 each carry the phosphoserine modification. Residue Lys-357 is modified to N6-acetyllysine; alternate. Residue Lys-357 forms a Glycyl lysine isopeptide (Lys-Gly) (interchain with G-Cter in SUMO2); alternate linkage. Residue Lys-378 forms a Glycyl lysine isopeptide (Lys-Gly) (interchain with G-Cter in SUMO2) linkage. Residues Ser-390 and Ser-409 each carry the phosphoserine modification. The disordered stretch occupies residues 399-431 (VQGQNRAPRISPPVKEEEAKGDNTGKSQGTQQR). The segment covering 412 to 421 (VKEEEAKGDN) has biased composition (basic and acidic residues). Lys-413 is covalently cross-linked (Glycyl lysine isopeptide (Lys-Gly) (interchain with G-Cter in SUMO2)). Residues 422-431 (TGKSQGTQQR) show a composition bias toward polar residues. A Glycyl lysine isopeptide (Lys-Gly) (interchain with G-Cter in SUMO2) cross-link involves residue Lys-489. Phosphoserine is present on residues Ser-498, Ser-515, Ser-527, and Ser-620. 5 C3H1-type zinc fingers span residues 595–620 (EKLL…HPIS), 621–640 (PCKA…VHPN), 641–656 (CKYD…PFTH), 681–698 (CRYF…YHPK), and 700–718 (CRFN…HPTI).

Belongs to the ZC3H14 family. As to quaternary structure, homodimer; facilitating circular RNAs (circRNAs) formation. Associates with the spliceosome. Interacts with HOOK2. Interacts with ZFC3H1 in a RNase-sensitive manner. Expressed in hippocampal pyramidal neurons (at protein level). Expressed in kidney, liver, muscle, heart brain and testes. Expressed in hippocampal pyramidal neurons.

The protein resides in the nucleus speckle. Functionally, RNA-binding protein involved in the biogenesis of circular RNAs (circRNAs), which are produced by back-splicing circularization of pre-mRNAs. Acts by binding to both exon-intron boundary and 3'-UTR of pre-mRNAs to promote circRNA biogenesis through dimerization and the association with the spliceosome. Required for spermatogenesis via involvement in circRNA biogenesis. Regulates the pre-mRNA processing of ATP5MC1; preventing its degradation. Also binds the poly(A) tail of mRNAs; controlling poly(A) length in neuronal cells. The polypeptide is Zinc finger CCCH domain-containing protein 14 (Mus musculus (Mouse)).